A 507-amino-acid chain; its full sequence is ATP synthase subunit alpha (507 aa).

Residue 169 to 176 (GDRQIGKT) participates in ATP binding.

This sequence belongs to the ATPase alpha/beta chains family. In terms of assembly, F-type ATPases have 2 components, CF(1) - the catalytic core - and CF(0) - the membrane proton channel. CF(1) has five subunits: alpha(3), beta(3), gamma(1), delta(1), epsilon(1). CF(0) has three main subunits: a(1), b(2) and c(9-12). The alpha and beta chains form an alternating ring which encloses part of the gamma chain. CF(1) is attached to CF(0) by a central stalk formed by the gamma and epsilon chains, while a peripheral stalk is formed by the delta and b chains.

It is found in the cell inner membrane. It carries out the reaction ATP + H2O + 4 H(+)(in) = ADP + phosphate + 5 H(+)(out). Functionally, produces ATP from ADP in the presence of a proton gradient across the membrane. The alpha chain is a regulatory subunit. The polypeptide is ATP synthase subunit alpha (Desulfotalea psychrophila (strain LSv54 / DSM 12343)).